The following is a 130-amino-acid chain: Small ribosomal subunit protein uS8 (130 aa).

This sequence belongs to the universal ribosomal protein uS8 family. As to quaternary structure, part of the 30S ribosomal subunit.

Its function is as follows. One of the primary rRNA binding proteins, it binds directly to 16S rRNA central domain where it helps coordinate assembly of the platform of the 30S subunit. This Methanoculleus marisnigri (strain ATCC 35101 / DSM 1498 / JR1) protein is Small ribosomal subunit protein uS8.